The primary structure comprises 168 residues: Group 2 truncated hemoglobin 3-1 (168 aa).

Heme b is bound at residue His98.

It belongs to the truncated hemoglobin family. Group II subfamily. As to quaternary structure, homodimer when ferric. Mainly expressed in root nodules, but barely in leaves, roots, stems, flowers and fruits.

Its function is as follows. Hemoglobin-like protein that exhibits an unusual concentration-independent binding of O(2) and CO. Required for general plant development and during nodulation. May promote shoot organogenesis from root explants. In Lotus japonicus (Lotus corniculatus var. japonicus), this protein is Group 2 truncated hemoglobin 3-1.